We begin with the raw amino-acid sequence, 218 residues long: UPF0758 protein SAUSA300_1608 (218 aa).

Residues 92–214 form the MPN domain; that stretch reads KITQPSDVAD…FTSLVEAGYF (123 aa). Zn(2+) is bound by residues H163, H165, and D176. The JAMM motif signature appears at 163-176; that stretch reads HNHPSGDVTPSQED.

This sequence belongs to the UPF0758 family.

This Staphylococcus aureus (strain USA300) protein is UPF0758 protein SAUSA300_1608.